Here is a 397-residue protein sequence, read N- to C-terminus: P2X purinoceptor 3 (397 aa).

The Cytoplasmic segment spans residues 1 to 20 (MNCISDFFTYETTKSVVVKS). A helical membrane pass occupies residues 21-43 (WTIGIINRVVQLLIISYFVGWVF). Topologically, residues 44–322 (LHEKAYQVRD…AGKFNIIPTI (279 aa)) are extracellular. Positions 63 and 65 each coordinate ATP. 3 disulfides stabilise this stretch: cysteine 107/cysteine 153, cysteine 116/cysteine 137, and cysteine 122/cysteine 147. Glutamate 111 is a Mg(2+) binding site. Asparagine 139 is a glycosylation site (N-linked (GlcNAc...) asparagine). Aspartate 158 contributes to the Mg(2+) binding site. Position 158 (aspartate 158) interacts with Ca(2+). N-linked (GlcNAc...) asparagine glycosylation is present at asparagine 170. ATP is bound at residue threonine 172. Residue asparagine 194 is glycosylated (N-linked (GlcNAc...) asparagine). 2 disulfide bridges follow: cysteine 203/cysteine 213 and cysteine 247/cysteine 256. Residues serine 275, asparagine 279, and arginine 281 each coordinate ATP. An N-linked (GlcNAc...) asparagine glycan is attached at asparagine 290. Lysine 299 is a binding site for ATP. A helical membrane pass occupies residues 323-341 (ISSVAAFTSVGVGTVLCDI). At 342–397 (ILLNFLKGADQYKAKKFEEVNETTLKIAALTNPVYPSDQTTAEKQSTDSGAFSIGH) the chain is on the cytoplasmic side. The segment covering 378-391 (SDQTTAEKQSTDSG) has biased composition (polar residues). The interval 378-397 (SDQTTAEKQSTDSGAFSIGH) is disordered.

The protein belongs to the P2X receptor family. As to quaternary structure, homotrimer. Forms heterotrimer with P2RX2. Heterotrimeric P2RX2/3 has a ligand dose-response profile that is distinct from either homotrimeric P2RX2 or P2RX3.

It localises to the cell membrane. The catalysed reaction is Ca(2+)(in) = Ca(2+)(out). It catalyses the reaction Na(+)(in) = Na(+)(out). Its activity is regulated as follows. Has high sensitivity to ATP. Fast activation by external ATP. Exhibits rapid desensitization. Sensitives to the ATP agonist:alpha/beta-methylene-ATP. Subject to allosteric inhibition by AF-219. Mg(2+) and Ca(2+) slow deactivation of P2RX3. Its function is as follows. Extracellular ATP-activated non-selective cation channel. Plays particularly important role in sensory neurons where its activation is critical for gustatory, nociceptive responses, visceral reflexes and sensory hypersensitization. This Homo sapiens (Human) protein is P2X purinoceptor 3 (P2RX3).